A 92-amino-acid chain; its full sequence is Small ribosomal subunit protein uS19 (92 aa).

This sequence belongs to the universal ribosomal protein uS19 family.

Functionally, protein S19 forms a complex with S13 that binds strongly to the 16S ribosomal RNA. The protein is Small ribosomal subunit protein uS19 of Rhodospirillum rubrum (strain ATCC 11170 / ATH 1.1.1 / DSM 467 / LMG 4362 / NCIMB 8255 / S1).